A 358-amino-acid chain; its full sequence is Transmembrane protein 144 homolog B (358 aa).

10 helical membrane-spanning segments follow: residues 6–26 (VIGYIGAAVASLFFGSNYVPV), 35–55 (LAFTWVMSVGTLVVAYCAMFI), 60–79 (IFDPWGLLGGTLWSIGNFCV), 86–108 (IGIGLGLLLWCCSSIITGYFTGK), 122–142 (PALNWIGFACIVAAVIFFFFI), 211–231 (ILGIVLSVFSGIMYGVNMVPM), 244–264 (LSFVFCHFSGIFLANTAVFIV), 279–299 (IFPSFFSGLLWGIANVGLMVA), 307–327 (IGFPMGSGGPMIVSSLWSVFY), and 337–357 (LLILLISFIFLGAGITILALS).

Belongs to the TMEM144 family.

Its subcellular location is the membrane. The polypeptide is Transmembrane protein 144 homolog B (tmem144B) (Dictyostelium discoideum (Social amoeba)).